The following is a 191-amino-acid chain: dITP/XTP pyrophosphatase (191 aa).

8 to 13 (SKNQGK) is a binding site for substrate. Residues Glu38 and Asp67 each coordinate Mg(2+). Asp67 functions as the Proton acceptor in the catalytic mechanism. Residues Ser68, 146 to 149 (FGYD), Lys169, and 174 to 175 (HR) each bind substrate.

The protein belongs to the HAM1 NTPase family. Homodimer. Requires Mg(2+) as cofactor.

It carries out the reaction XTP + H2O = XMP + diphosphate + H(+). The enzyme catalyses dITP + H2O = dIMP + diphosphate + H(+). The catalysed reaction is ITP + H2O = IMP + diphosphate + H(+). Its function is as follows. Pyrophosphatase that catalyzes the hydrolysis of nucleoside triphosphates to their monophosphate derivatives, with a high preference for the non-canonical purine nucleotides XTP (xanthosine triphosphate), dITP (deoxyinosine triphosphate) and ITP. Seems to function as a house-cleaning enzyme that removes non-canonical purine nucleotides from the nucleotide pool, thus preventing their incorporation into DNA/RNA and avoiding chromosomal lesions. This Prochlorococcus marinus subsp. pastoris (strain CCMP1986 / NIES-2087 / MED4) protein is dITP/XTP pyrophosphatase.